A 702-amino-acid chain; its full sequence is MA3 DOMAIN-CONTAINING TRANSLATION REGULATORY FACTOR 1 (702 aa).

Residues 39–66 form a disordered region; the sequence is LNIKSPTGGKGPVAGIPNRHVRRTHSGK. Basic residues predominate over residues 57-66; the sequence is RHVRRTHSGK. Residues 122 to 243 enclose the MI 1 domain; the sequence is DYKKSVVSII…PPVFLVRSKK (122 aa). The Nuclear localization signal 1 signature appears at 273–280; sequence EKKWGGST. MI domains follow at residues 286–407, 420–541, and 583–702; these read ETKK…TSDQ, QYKK…DIST, and DAKD…SATQ. The Nuclear localization signal 2 signature appears at 458-465; sequence LKRLITLA.

It belongs to the PDCD4 family. As to quaternary structure, binds to EIF4A1, S6K1 and S6K2. The association with ribosomes is modulated by cellular energy status and TOR activity. Phosphorylation by S6 kinases (e.g. S6K1 and S6K2) is modulated by cellular energy status and TOR activity. In terms of tissue distribution, mostly expressed in vegetative tissues, such as leaves, roots and stems, and, to a lower extent, in reproductive tissues, such as flower buds and flowers.

Its subcellular location is the nucleus. The protein resides in the cytoplasm. It is found in the cytosol. Its function is as follows. Involved in target of rapamycin (TOR)-regulated translation control, especially under energy-deficient conditions. This is MA3 DOMAIN-CONTAINING TRANSLATION REGULATORY FACTOR 1 from Arabidopsis thaliana (Mouse-ear cress).